The primary structure comprises 249 residues: MAGHSKWANIQHRKNAQDAKRGKLFTKLIKEITVAARMGGSDLNSNPRLRLAVDKALDANMTKDTVERAIKRGAGELEGVNYEEIRYEGYGPGGVAIMVDTMTDNRNRTVAEVRHAFTKCGGNLGTDGSVAYLFEKQGVLSYPAGSDEDRIMEVALEAGAEDVAVGDDGSIEVITNPDDYEAVRAAMTEAGLKPEHNEVTMRAGTAAPVDVESAPSLLKLLDMLDDLDDVQNVYTNADFPDEVMQALEA.

It belongs to the TACO1 family.

The protein resides in the cytoplasm. In Thioalkalivibrio sulfidiphilus (strain HL-EbGR7), this protein is Probable transcriptional regulatory protein Tgr7_2237.